The following is a 386-amino-acid chain: 1-deoxy-D-xylulose 5-phosphate reductoisomerase (386 aa).

T10, G11, S12, I13, G36, N38, and N122 together coordinate NADPH. Residue K123 participates in 1-deoxy-D-xylulose 5-phosphate binding. E124 provides a ligand contact to NADPH. A Mn(2+)-binding site is contributed by D148. 1-deoxy-D-xylulose 5-phosphate contacts are provided by S149, E150, S174, and H197. A Mn(2+)-binding site is contributed by E150. An NADPH-binding site is contributed by G203. Residues S210, N215, K216, and E219 each coordinate 1-deoxy-D-xylulose 5-phosphate. E219 provides a ligand contact to Mn(2+).

It belongs to the DXR family. Requires Mg(2+) as cofactor. Mn(2+) serves as cofactor.

It carries out the reaction 2-C-methyl-D-erythritol 4-phosphate + NADP(+) = 1-deoxy-D-xylulose 5-phosphate + NADPH + H(+). The protein operates within isoprenoid biosynthesis; isopentenyl diphosphate biosynthesis via DXP pathway; isopentenyl diphosphate from 1-deoxy-D-xylulose 5-phosphate: step 1/6. Catalyzes the NADPH-dependent rearrangement and reduction of 1-deoxy-D-xylulose-5-phosphate (DXP) to 2-C-methyl-D-erythritol 4-phosphate (MEP). The protein is 1-deoxy-D-xylulose 5-phosphate reductoisomerase of Geobacter sulfurreducens (strain ATCC 51573 / DSM 12127 / PCA).